The chain runs to 423 residues: Glutamyl-tRNA reductase (423 aa).

Substrate contacts are provided by residues threonine 49–arginine 52, serine 109, glutamate 114–glutamine 116, and glutamine 120. Residue cysteine 50 is the Nucleophile of the active site. Glycine 189–glycine 194 is a binding site for NADP(+).

This sequence belongs to the glutamyl-tRNA reductase family. Homodimer.

It catalyses the reaction (S)-4-amino-5-oxopentanoate + tRNA(Glu) + NADP(+) = L-glutamyl-tRNA(Glu) + NADPH + H(+). It functions in the pathway porphyrin-containing compound metabolism; protoporphyrin-IX biosynthesis; 5-aminolevulinate from L-glutamyl-tRNA(Glu): step 1/2. It participates in porphyrin-containing compound metabolism; chlorophyll biosynthesis. Its function is as follows. Catalyzes the NADPH-dependent reduction of glutamyl-tRNA(Glu) to glutamate 1-semialdehyde (GSA). In Chlorobium limicola (strain DSM 245 / NBRC 103803 / 6330), this protein is Glutamyl-tRNA reductase.